We begin with the raw amino-acid sequence, 297 residues long: T-cell leukemia homeobox protein 3 (297 aa).

Positions M1–Y68 are disordered. Residues A32–G52 show a composition bias toward pro residues. Residues R172–T231 constitute a DNA-binding region (homeobox).

Expression is restricted to neurons in the peripheral and central nervous system.

Its subcellular location is the nucleus. Seems to be involved in the development of cranial sensory innervation from peripheral ganglia. This Gallus gallus (Chicken) protein is T-cell leukemia homeobox protein 3 (TLX3).